A 69-amino-acid chain; its full sequence is DNA gyrase inhibitor YacG (69 aa).

Zn(2+) contacts are provided by Cys-13, Cys-16, Cys-32, and Cys-36.

This sequence belongs to the DNA gyrase inhibitor YacG family. In terms of assembly, interacts with GyrB. It depends on Zn(2+) as a cofactor.

Inhibits all the catalytic activities of DNA gyrase by preventing its interaction with DNA. Acts by binding directly to the C-terminal domain of GyrB, which probably disrupts DNA binding by the gyrase. The protein is DNA gyrase inhibitor YacG of Neisseria meningitidis serogroup C / serotype 2a (strain ATCC 700532 / DSM 15464 / FAM18).